The chain runs to 149 residues: Ribonuclease H (149 aa).

Residues 1–145 (MKKVIIYTDG…CDKLANEAMD (145 aa)) form the RNase H type-1 domain. 4 residues coordinate Mg(2+): Asp-9, Glu-50, Asp-72, and Asp-137.

The protein belongs to the RNase H family. Monomer. The cofactor is Mg(2+).

It is found in the cytoplasm. It carries out the reaction Endonucleolytic cleavage to 5'-phosphomonoester.. Endonuclease that specifically degrades the RNA of RNA-DNA hybrids. The sequence is that of Ribonuclease H from Clostridium botulinum (strain ATCC 19397 / Type A).